We begin with the raw amino-acid sequence, 296 residues long: Aspartate carbamoyltransferase catalytic subunit (296 aa).

Positions 50 and 51 each coordinate carbamoyl phosphate. Lysine 79 is an L-aspartate binding site. Positions 100, 128, and 131 each coordinate carbamoyl phosphate. Positions 161 and 219 each coordinate L-aspartate. Carbamoyl phosphate contacts are provided by leucine 258 and proline 259.

This sequence belongs to the aspartate/ornithine carbamoyltransferase superfamily. ATCase family. In terms of assembly, heterooligomer of catalytic and regulatory chains.

It catalyses the reaction carbamoyl phosphate + L-aspartate = N-carbamoyl-L-aspartate + phosphate + H(+). It participates in pyrimidine metabolism; UMP biosynthesis via de novo pathway; (S)-dihydroorotate from bicarbonate: step 2/3. Functionally, catalyzes the condensation of carbamoyl phosphate and aspartate to form carbamoyl aspartate and inorganic phosphate, the committed step in the de novo pyrimidine nucleotide biosynthesis pathway. This Korarchaeum cryptofilum (strain OPF8) protein is Aspartate carbamoyltransferase catalytic subunit.